The following is a 1073-amino-acid chain: Carbamoyl phosphate synthase large chain (1073 aa).

Positions 1 to 402 are carboxyphosphate synthetic domain; the sequence is MPRRIDVRKV…ALQKAIRMLD (402 aa). The ATP site is built by R129, R169, G175, G176, K208, L210, E215, G241, V242, H243, Q284, and E299. Positions 133–328 constitute an ATP-grasp 1 domain; that stretch reads RETMMKAGLP…LAYIAAKLAL (196 aa). Q284, E299, and N301 together coordinate Mg(2+). 3 residues coordinate Mn(2+): Q284, E299, and N301. Residues 403-555 are oligomerization domain; sequence IGEPGVVAGP…MSYNAYEDDE (153 aa). Residues 556–944 are carbamoyl phosphate synthetic domain; the sequence is PITTGRPRLI…LKSWLSVQGN (389 aa). The region spanning 681–871 is the ATP-grasp 2 domain; that stretch reads SQLLEELGIK…LMRAAAEAAL (191 aa). ATP contacts are provided by R717, K756, L758, E763, G787, V788, H789, S790, Q830, and E842. The Mg(2+) site is built by Q830, E842, and N844. The Mn(2+) site is built by Q830, E842, and N844. The MGS-like domain maps to 944–1073; it reads NRIPPAGSIV…EYWGPNVEPF (130 aa). Residues 945–1073 are allosteric domain; sequence RIPPAGSIVL…EYWGPNVEPF (129 aa).

This sequence belongs to the CarB family. In terms of assembly, composed of two chains; the small (or glutamine) chain promotes the hydrolysis of glutamine to ammonia, which is used by the large (or ammonia) chain to synthesize carbamoyl phosphate. Tetramer of heterodimers (alpha,beta)4. Mg(2+) is required as a cofactor. Requires Mn(2+) as cofactor.

The enzyme catalyses hydrogencarbonate + L-glutamine + 2 ATP + H2O = carbamoyl phosphate + L-glutamate + 2 ADP + phosphate + 2 H(+). The catalysed reaction is hydrogencarbonate + NH4(+) + 2 ATP = carbamoyl phosphate + 2 ADP + phosphate + 2 H(+). The protein operates within amino-acid biosynthesis; L-arginine biosynthesis; carbamoyl phosphate from bicarbonate: step 1/1. It participates in pyrimidine metabolism; UMP biosynthesis via de novo pathway; (S)-dihydroorotate from bicarbonate: step 1/3. Its function is as follows. Large subunit of the glutamine-dependent carbamoyl phosphate synthetase (CPSase). CPSase catalyzes the formation of carbamoyl phosphate from the ammonia moiety of glutamine, carbonate, and phosphate donated by ATP, constituting the first step of 2 biosynthetic pathways, one leading to arginine and/or urea and the other to pyrimidine nucleotides. The large subunit (synthetase) binds the substrates ammonia (free or transferred from glutamine from the small subunit), hydrogencarbonate and ATP and carries out an ATP-coupled ligase reaction, activating hydrogencarbonate by forming carboxy phosphate which reacts with ammonia to form carbamoyl phosphate. This chain is Carbamoyl phosphate synthase large chain, found in Hyperthermus butylicus (strain DSM 5456 / JCM 9403 / PLM1-5).